We begin with the raw amino-acid sequence, 379 residues long: Odorant receptor 23a (379 aa).

Residues 1 to 36 (MKLSETLKIDYFRVQLNAWRICGALDLSEGRYWSWS) lie on the Cytoplasmic side of the membrane. A helical transmembrane segment spans residues 37–57 (MLLCILVYLPTPMLLRGVYSF). Topologically, residues 58-64 (EDPVENN) are extracellular. N64 is a glycosylation site (N-linked (GlcNAc...) asparagine). Residues 65–85 (FSLSLTVTSLSNLMKFCMYVA) form a helical membrane-spanning segment. The Cytoplasmic portion of the chain corresponds to 86–125 (QLTKMVEVQSLIGQLDARVSGESQSERHRNMTEHLLRMSK). The helical transmembrane segment at 126 to 146 (LFQITYAVVFIIAAVPFVFET) threads the bilayer. Residues 147–162 (ELSLPMPMWFPFDWKN) lie on the Extracellular side of the membrane. A helical transmembrane segment spans residues 163 to 183 (SMVAYIGALVFQEIGYVFQIM). Topologically, residues 184 to 253 (QCFAADSFPP…TKSLVSYPMM (70 aa)) are cytoplasmic. The chain crosses the membrane as a helical span at residues 254 to 274 (VQFMVIGINIAITLFVLIFYV). Topologically, residues 275-280 (ETLYDR) are extracellular. The helical transmembrane segment at 281–301 (IYYLCFLLGITVQTYPLCYYG) threads the bilayer. The Cytoplasmic segment spans residues 302–340 (TMVQESFAELHYAVFCSNWVDQSASYRGHMLILAERTKR). The chain crosses the membrane as a helical span at residues 341–361 (MQLLLAGNLVPIHLSTYVACW). The Extracellular portion of the chain corresponds to 362–379 (KGAYSFFTLMADRDGLGS).

It belongs to the insect chemoreceptor superfamily. Heteromeric odorant receptor channel (TC 1.A.69) family. Or2a subfamily. As to quaternary structure, interacts with Orco. Complexes exist early in the endomembrane system in olfactory sensory neurons (OSNs), coupling these complexes to the conserved ciliary trafficking pathway. As to expression, expressed in 10-40 sensory cells in the third antenna segment and in the maxillary palp.

It is found in the cell membrane. Functionally, odorant receptor which mediates acceptance or avoidance behavior, depending on its substrates. The odorant receptor repertoire encodes a large collection of odor stimuli that vary widely in identity, intensity, and duration. May form a complex with Orco to form odorant-sensing units, providing sensitive and prolonged odorant signaling and calcium permeability. The protein is Odorant receptor 23a (Or23a) of Drosophila melanogaster (Fruit fly).